A 220-amino-acid chain; its full sequence is Guanylate kinase (220 aa).

Residues 15–194 form the Guanylate kinase-like domain; sequence GLMLVISSPS…ALDAVQSIVK (180 aa). 22 to 29 lines the ATP pocket; the sequence is SPSGAGKS.

It belongs to the guanylate kinase family.

The protein resides in the cytoplasm. It catalyses the reaction GMP + ATP = GDP + ADP. In terms of biological role, essential for recycling GMP and indirectly, cGMP. The chain is Guanylate kinase from Rhizobium johnstonii (strain DSM 114642 / LMG 32736 / 3841) (Rhizobium leguminosarum bv. viciae).